Here is a 95-residue protein sequence, read N- to C-terminus: Small ribosomal subunit protein bS6 (95 aa).

Belongs to the bacterial ribosomal protein bS6 family.

Functionally, binds together with bS18 to 16S ribosomal RNA. This chain is Small ribosomal subunit protein bS6, found in Oceanobacillus iheyensis (strain DSM 14371 / CIP 107618 / JCM 11309 / KCTC 3954 / HTE831).